Reading from the N-terminus, the 135-residue chain is Universal stress protein Aq_178 (135 aa).

The protein belongs to the universal stress protein A family.

This Aquifex aeolicus (strain VF5) protein is Universal stress protein Aq_178.